Consider the following 432-residue polypeptide: Probable exopolygalacturonase X (432 aa).

Positions 1 to 23 (MKFSYSFVQVVTLLLSLSPSVEG) are cleaved as a signal peptide. Asn-113, Asn-129, and Asn-199 each carry an N-linked (GlcNAc...) asparagine glycan. The PbH1 1 repeat unit spans residues 231 to 252 (SDNIVIQNSVINNGDDCVSFKP). Asp-245 acts as the Proton donor in catalysis. A disulfide bridge connects residues Cys-247 and Cys-264. Residues Asn-253 and Asn-265 are each glycosylated (N-linked (GlcNAc...) asparagine). PbH1 repeat units lie at residues 254–274 (STNI…SVGS), 285–306 (VQNV…RIKV), and 327–348 (VKNV…EVTQ). His-268 is a catalytic residue. N-linked (GlcNAc...) asparagine glycosylation is found at Asn-292, Asn-297, Asn-329, Asn-354, and Asn-364. A PbH1 5 repeat occupies 362–394 (PSNLTISDIHFKNFRGTTSGKRDPNVGTIVCSS). Cys-392 and Cys-398 form a disulfide bridge.

It belongs to the glycosyl hydrolase 28 family.

The protein resides in the secreted. It catalyses the reaction [(1-&gt;4)-alpha-D-galacturonosyl](n) + H2O = alpha-D-galacturonate + [(1-&gt;4)-alpha-D-galacturonosyl](n-1). Its function is as follows. Specific in hydrolyzing the terminal glycosidic bond of polygalacturonic acid and oligogalacturonates. This chain is Probable exopolygalacturonase X (pgaX), found in Aspergillus fumigatus (strain CBS 144.89 / FGSC A1163 / CEA10) (Neosartorya fumigata).